A 996-amino-acid polypeptide reads, in one-letter code: Protein psiR (996 aa).

A signal peptide spans 1–21 (MKKIILMLLLFSIFFILKSES). Residues N79, N117, N323, N396, N428, N474, N500, N645, and N779 are each glycosylated (N-linked (GlcNAc...) asparagine). The PA14 domain maps to 105-250 (QSLSNPNIYS…YDECGVCEGD (146 aa)).

This sequence belongs to the prespore-cell-inducing factor family.

It is found in the secreted. The chain is Protein psiR (psiR) from Dictyostelium discoideum (Social amoeba).